We begin with the raw amino-acid sequence, 23 residues long: Septenin 2c (23 aa).

Expressed in skin granular glands.

The protein localises to the secreted. May act as an antimicrobial peptide. The sequence is that of Septenin 2c from Osteopilus septentrionalis (Cuban treefrog).